A 990-amino-acid chain; its full sequence is Tyrosine-protein phosphatase 3 (990 aa).

4 disordered regions span residues 47-88, 100-193, 246-414, and 431-452; these read QSQS…SPSV, NKIN…SNIE, PNQQ…SFSQ, and KPEMASKKSHKHHQRHYSHNDL. Composition is skewed to low complexity over residues 52 to 88 and 100 to 117; these read NTNTNNINNSSSNINNNNNNTPDSMSMSTSLSSSPSV and NKINNNTTTNNNNNNNNN. Positions 127–136 are enriched in polar residues; that stretch reads LKLSNTMIIK. 5 stretches are compositionally biased toward low complexity: residues 137–191, 250–271, 278–293, 310–327, and 334–413; these read NNNN…SNSN, SSSSSSLSSTTTTTTTTSSSLL, NNSTYNNHHNNNNSSN, QAQVQLQQMQQQMQQHQQ, and NLSS…TSFS. The 294-residue stretch at 422-715 folds into the Tyrosine-protein phosphatase domain; sequence MRLEFEMIKK…IFIFKVINDV (294 aa). Residues 437-447 are compositionally biased toward basic residues; it reads KKSHKHHQRHY. Catalysis depends on Cys650, which acts as the Phosphocysteine intermediate. A compositionally biased stretch (polar residues) spans 786–795; it reads PPQQQQDNPF. 2 disordered regions span residues 786 to 814 and 834 to 990; these read PPQQQQDNPFSKSSIKISPSPLNSTNISI and LQQQ…IKCF. Composition is skewed to low complexity over residues 796–806 and 834–850; these read SKSSIKISPSP and LQQQQQQSSQQLNDNPP. The segment covering 851–868 has biased composition (polar residues); sequence LNMSSNSIKFPPVTSLSS. Low complexity-rich tracts occupy residues 878-916 and 924-968; these read NDNNNKQQQQQQQQQQKNNQQCSGFSHFLNNNNNNDNNG and GSFL…SDNN.

Belongs to the protein-tyrosine phosphatase family. Non-receptor class subfamily. In the anterior-like and prestalk cell types.

The protein resides in the cytoplasm. The enzyme catalyses O-phospho-L-tyrosyl-[protein] + H2O = L-tyrosyl-[protein] + phosphate. In terms of biological role, seems to dephosphorylate a protein of 130 kDa (p130). This chain is Tyrosine-protein phosphatase 3 (ptpC), found in Dictyostelium discoideum (Social amoeba).